Consider the following 554-residue polypeptide: 2-succinyl-5-enolpyruvyl-6-hydroxy-3-cyclohexene-1-carboxylate synthase (554 aa).

It belongs to the TPP enzyme family. MenD subfamily. As to quaternary structure, homodimer. Mg(2+) is required as a cofactor. The cofactor is Mn(2+). It depends on thiamine diphosphate as a cofactor.

The enzyme catalyses isochorismate + 2-oxoglutarate + H(+) = 5-enolpyruvoyl-6-hydroxy-2-succinyl-cyclohex-3-ene-1-carboxylate + CO2. It participates in quinol/quinone metabolism; 1,4-dihydroxy-2-naphthoate biosynthesis; 1,4-dihydroxy-2-naphthoate from chorismate: step 2/7. The protein operates within quinol/quinone metabolism; menaquinone biosynthesis. In terms of biological role, catalyzes the thiamine diphosphate-dependent decarboxylation of 2-oxoglutarate and the subsequent addition of the resulting succinic semialdehyde-thiamine pyrophosphate anion to isochorismate to yield 2-succinyl-5-enolpyruvyl-6-hydroxy-3-cyclohexene-1-carboxylate (SEPHCHC). The sequence is that of 2-succinyl-5-enolpyruvyl-6-hydroxy-3-cyclohexene-1-carboxylate synthase from Mycobacterium tuberculosis (strain ATCC 25177 / H37Ra).